The primary structure comprises 243 residues: Orotidine 5'-phosphate decarboxylase (243 aa).

Substrate is bound by residues Asp-18, Lys-39, 66-75 (DLKFHDIPTT), Thr-130, Arg-192, Gln-201, Gly-221, and Arg-222. Catalysis depends on Lys-68, which acts as the Proton donor.

This sequence belongs to the OMP decarboxylase family. Type 1 subfamily. Homodimer.

The enzyme catalyses orotidine 5'-phosphate + H(+) = UMP + CO2. Its pathway is pyrimidine metabolism; UMP biosynthesis via de novo pathway; UMP from orotate: step 2/2. Functionally, catalyzes the decarboxylation of orotidine 5'-monophosphate (OMP) to uridine 5'-monophosphate (UMP). This Synechococcus sp. (strain CC9311) protein is Orotidine 5'-phosphate decarboxylase.